Here is a 174-residue protein sequence, read N- to C-terminus: Ubiquitin-fold modifier-conjugating enzyme 1 (174 aa).

Residue cysteine 119 is the Glycyl thioester intermediate of the active site.

Belongs to the ubiquitin-conjugating enzyme family. UFC1 subfamily.

E2-like enzyme which forms an intermediate with UFM1 via a thioester linkage. In Arabidopsis thaliana (Mouse-ear cress), this protein is Ubiquitin-fold modifier-conjugating enzyme 1.